The chain runs to 180 residues: Iron sulfur cluster assembly protein 1, mitochondrial (180 aa).

The protein belongs to the NifU family. In terms of assembly, component of the core Fe-S cluster (ISC) assembly machinery. It depends on [2Fe-2S] cluster as a cofactor.

It localises to the mitochondrion matrix. The protein operates within cofactor biosynthesis; iron-sulfur cluster biosynthesis. Its function is as follows. Scaffold protein for the de novo synthesis of iron-sulfur (Fe-S) clusters within mitochondria, which is required for maturation of both mitochondrial and cytoplasmic [2Fe-2S] and [4Fe-4S] proteins. First, a [2Fe-2S] cluster is transiently assembled on the scaffold protein ISU1. In a second step, the cluster is released from ISU1, transferred to a glutaredoxin, followed by the formation of mitochondrial [2Fe-2S] proteins, the synthesis of [4Fe-4S] clusters and their target-specific insertion into the recipient apoproteins. Cluster assembly on ISU1 depends on the function of the cysteine desulfurase complex NFS1-ISD11, which serves as the sulfur donor for cluster synthesis, the iron-binding protein frataxin as the putative iron donor, and the electron transfer chain comprised of ferredoxin reductase and ferredoxin, which receive their electrons from NADH. This chain is Iron sulfur cluster assembly protein 1, mitochondrial (ISU1), found in Kluyveromyces lactis (strain ATCC 8585 / CBS 2359 / DSM 70799 / NBRC 1267 / NRRL Y-1140 / WM37) (Yeast).